A 56-amino-acid chain; its full sequence is UPF0391 membrane protein Noc_0484 (56 aa).

Transmembrane regions (helical) follow at residues 6 to 26 (VTFLIVALVAALLGFTGIAGI) and 29 to 49 (EIAWILFVVGIILFVVFLVLG).

Belongs to the UPF0391 family.

The protein resides in the cell membrane. The protein is UPF0391 membrane protein Noc_0484 of Nitrosococcus oceani (strain ATCC 19707 / BCRC 17464 / JCM 30415 / NCIMB 11848 / C-107).